We begin with the raw amino-acid sequence, 89 residues long: Small ribosomal subunit protein uS15 (89 aa).

The protein belongs to the universal ribosomal protein uS15 family. Part of the 30S ribosomal subunit. Forms a bridge to the 50S subunit in the 70S ribosome, contacting the 23S rRNA.

Functionally, one of the primary rRNA binding proteins, it binds directly to 16S rRNA where it helps nucleate assembly of the platform of the 30S subunit by binding and bridging several RNA helices of the 16S rRNA. In terms of biological role, forms an intersubunit bridge (bridge B4) with the 23S rRNA of the 50S subunit in the ribosome. This Yersinia enterocolitica serotype O:8 / biotype 1B (strain NCTC 13174 / 8081) protein is Small ribosomal subunit protein uS15.